We begin with the raw amino-acid sequence, 154 residues long: Aspartate carbamoyltransferase regulatory chain (154 aa).

4 residues coordinate Zn(2+): Cys109, Cys114, Cys138, and Cys141.

It belongs to the PyrI family. In terms of assembly, contains catalytic and regulatory chains. It depends on Zn(2+) as a cofactor.

Involved in allosteric regulation of aspartate carbamoyltransferase. This Aliivibrio fischeri (strain ATCC 700601 / ES114) (Vibrio fischeri) protein is Aspartate carbamoyltransferase regulatory chain.